A 449-amino-acid chain; its full sequence is Exodeoxyribonuclease 7 large subunit (449 aa).

This sequence belongs to the XseA family. Heterooligomer composed of large and small subunits.

It localises to the cytoplasm. It catalyses the reaction Exonucleolytic cleavage in either 5'- to 3'- or 3'- to 5'-direction to yield nucleoside 5'-phosphates.. In terms of biological role, bidirectionally degrades single-stranded DNA into large acid-insoluble oligonucleotides, which are then degraded further into small acid-soluble oligonucleotides. In Salmonella schwarzengrund (strain CVM19633), this protein is Exodeoxyribonuclease 7 large subunit.